The sequence spans 117 residues: Large ribosomal subunit protein uL24 (117 aa).

The segment covering 1 to 10 (MSKQPRKQRK) has biased composition (basic residues). A disordered region spans residues 1-28 (MSKQPRKQRKALYTAPLHKRHNSMSVHL).

Belongs to the universal ribosomal protein uL24 family. Part of the 50S ribosomal subunit.

Functionally, one of two assembly initiator proteins, it binds directly to the 5'-end of the 23S rRNA, where it nucleates assembly of the 50S subunit. In terms of biological role, located at the polypeptide exit tunnel on the outside of the subunit. The sequence is that of Large ribosomal subunit protein uL24 from Methanosphaera stadtmanae (strain ATCC 43021 / DSM 3091 / JCM 11832 / MCB-3).